A 127-amino-acid chain; its full sequence is Large ribosomal subunit protein bL19 (127 aa).

This sequence belongs to the bacterial ribosomal protein bL19 family.

Functionally, this protein is located at the 30S-50S ribosomal subunit interface and may play a role in the structure and function of the aminoacyl-tRNA binding site. In Myxococcus xanthus (strain DK1622), this protein is Large ribosomal subunit protein bL19.